A 156-amino-acid chain; its full sequence is uncharacterized protein (156 aa).

2 helical membrane passes run 46-66 (GLVL…AGVV) and 114-134 (IIDI…IVAL).

The protein resides in the cell membrane. This is an uncharacterized protein from Haemophilus influenzae (strain ATCC 51907 / DSM 11121 / KW20 / Rd).